A 271-amino-acid chain; its full sequence is Colicin-M (271 aa).

A TonB box motif is present at residues 2–9 (ETLTVHAP).

In terms of biological role, colicins are polypeptide toxins produced by and active against E.coli and closely related bacteria. Its function is as follows. This is a calcium-requiring inhibitor for murein biosynthesis; it causes lysis of sensitive cells accompanied by murein degradation. The target site is possibly the cytoplasmic membrane. The sequence is that of Colicin-M (cma) from Escherichia coli.